A 94-amino-acid polypeptide reads, in one-letter code: Pyrimidine/purine nucleoside phosphorylase (94 aa).

Belongs to the nucleoside phosphorylase PpnP family.

It catalyses the reaction a purine D-ribonucleoside + phosphate = a purine nucleobase + alpha-D-ribose 1-phosphate. The enzyme catalyses adenosine + phosphate = alpha-D-ribose 1-phosphate + adenine. The catalysed reaction is cytidine + phosphate = cytosine + alpha-D-ribose 1-phosphate. It carries out the reaction guanosine + phosphate = alpha-D-ribose 1-phosphate + guanine. It catalyses the reaction inosine + phosphate = alpha-D-ribose 1-phosphate + hypoxanthine. The enzyme catalyses thymidine + phosphate = 2-deoxy-alpha-D-ribose 1-phosphate + thymine. The catalysed reaction is uridine + phosphate = alpha-D-ribose 1-phosphate + uracil. It carries out the reaction xanthosine + phosphate = alpha-D-ribose 1-phosphate + xanthine. Catalyzes the phosphorolysis of diverse nucleosides, yielding D-ribose 1-phosphate and the respective free bases. Can use uridine, adenosine, guanosine, cytidine, thymidine, inosine and xanthosine as substrates. Also catalyzes the reverse reactions. The chain is Pyrimidine/purine nucleoside phosphorylase from Alcanivorax borkumensis (strain ATCC 700651 / DSM 11573 / NCIMB 13689 / SK2).